A 438-amino-acid chain; its full sequence is UDP-N-acetylmuramoylalanine--D-glutamate ligase (438 aa).

112–118 (GSNGKST) serves as a coordination point for ATP.

The protein belongs to the MurCDEF family.

Its subcellular location is the cytoplasm. It catalyses the reaction UDP-N-acetyl-alpha-D-muramoyl-L-alanine + D-glutamate + ATP = UDP-N-acetyl-alpha-D-muramoyl-L-alanyl-D-glutamate + ADP + phosphate + H(+). Its pathway is cell wall biogenesis; peptidoglycan biosynthesis. Cell wall formation. Catalyzes the addition of glutamate to the nucleotide precursor UDP-N-acetylmuramoyl-L-alanine (UMA). The protein is UDP-N-acetylmuramoylalanine--D-glutamate ligase of Escherichia coli O6:K15:H31 (strain 536 / UPEC).